Reading from the N-terminus, the 223-residue chain is Chalcone--flavanone isomerase 2 (223 aa).

3 residues coordinate substrate: threonine 41, asparagine 106, and serine 183.

The protein belongs to the chalcone isomerase family.

It carries out the reaction a chalcone = a flavanone.. It participates in secondary metabolite biosynthesis; flavonoid biosynthesis. In terms of biological role, catalyzes the intramolecular cyclization of bicyclic chalcones into tricyclic (S)-flavanones. Responsible for the isomerization of 4,2',4',6'-tetrahydroxychalcone (also termed chalcone) into naringenin. The polypeptide is Chalcone--flavanone isomerase 2 (CHI2) (Arabidopsis thaliana (Mouse-ear cress)).